The primary structure comprises 113 residues: ATP-dependent Clp protease adapter protein ClpS (113 aa).

Positions 1–26 (MLMQPLMMSDNPDDESDLGLLTKTRP) are disordered.

It belongs to the ClpS family. Binds to the N-terminal domain of the chaperone ClpA.

Involved in the modulation of the specificity of the ClpAP-mediated ATP-dependent protein degradation. The protein is ATP-dependent Clp protease adapter protein ClpS of Ruegeria sp. (strain TM1040) (Silicibacter sp.).